A 481-amino-acid chain; its full sequence is Dual specificity protein kinase CLK4 (481 aa).

2 disordered regions span residues 1-46 (MRHS…CKPH) and 102-143 (SKSS…EDDE). Basic and acidic residues predominate over residues 8-24 (HCPDWDSRESWGHESYR). 2 stretches are compositionally biased toward basic residues: residues 25–34 (GSHKRKRRSH) and 106–136 (VRSR…RKRS). Residues serine 136 and serine 138 each carry the phosphoserine modification. Residues 159–475 (YEIVDTLGEG…LDEALQHPFF (317 aa)) enclose the Protein kinase domain. Residues 165–173 (LGEGAFGKV) and lysine 189 contribute to the ATP site. Aspartate 286 acts as the Proton acceptor in catalysis.

This sequence belongs to the protein kinase superfamily. CMGC Ser/Thr protein kinase family. Lammer subfamily. In terms of assembly, interacts with UBL5. Post-translationally, autophosphorylates on all three types of residues. Expressed in liver, kidney, heart, muscle, brain and endothelial cells.

It is found in the nucleus. It carries out the reaction L-seryl-[protein] + ATP = O-phospho-L-seryl-[protein] + ADP + H(+). It catalyses the reaction L-threonyl-[protein] + ATP = O-phospho-L-threonyl-[protein] + ADP + H(+). The catalysed reaction is L-tyrosyl-[protein] + ATP = O-phospho-L-tyrosyl-[protein] + ADP + H(+). With respect to regulation, TG003 inhibits its kinase activity and affects the regulation of alternative splicing mediated by phosphorylation of SR proteins. Functionally, dual specificity kinase acting on both serine/threonine and tyrosine-containing substrates. Phosphorylates serine- and arginine-rich (SR) proteins of the spliceosomal complex and may be a constituent of a network of regulatory mechanisms that enable SR proteins to control RNA splicing. Phosphorylates SRSF1 and SRSF3. Required for the regulation of alternative splicing of MAPT/TAU. Regulates the alternative splicing of tissue factor (F3) pre-mRNA in endothelial cells. This is Dual specificity protein kinase CLK4 (CLK4) from Homo sapiens (Human).